The chain runs to 760 residues: MFQYEALHVGCNRIPTAATWSSNLGLIYGAERLIAVADPFKEINYLMAGHSGRINCVCELATNSEYRSPFILSGASDKTLRLWQLEEEYFTCIKTIELEATVNCLCVNENLVVCGCSNSSCIVYSWNAEQRNLTEISRFTCSEIIPLEFAIVKLDHGIILTVCGSSKKIMVYGSDSAISSFKLKAVLRGHLDWVRTLSFKKTSGSTATLASGSQDRYIRLWNISLWGSEDEKVSEEFFESVLSNKPVRFTLGKIDLKIVFDALLMGHEDWVMSVDWHPTKEMILSSSADSSMIVWEPDTNTGIWVVTGRMGEMASSHGSTTATGSAGGFWGGLWNPNGNCVVCWGRTGGWRLWKQDAGQWLQLPSISGHTKSVKGVAWDPEGKFYLSAGTDQTTRLFARFKKDNAWHEMARPQIHGYDLTSISCMPSRIGFLSCADEKVSRVFKFPKTIVRLLYRLCDTNIGEESLPDAANVPLLGLSNKATTASETGTVNAEEVQTPVADVIGSLNHPPFEEHLQRLLLFPEVEKLFGHGYEVYACAISNNGNIAATSCKSQTPEHAVIRLYETQSWNQQQVLKGHSLTVTTIKFSPDDRYILSAGRDRLVCLHEQAENLLDYNNFASIKAHSRIIWDASWAPKEMGYFFATASRDKFVKFWKINDNKKICDVAALQFSDAVTAVDFAPFFHNDELLLAVGTEAGKIFIWRCPRENLTKWYPTRLPDHMAPMESINQILWKPTFETMGLYSLLIAGEDTSVRLLNVTLG.

WD repeat units lie at residues 49–93 (GHSG…FTCI), 97–134 (ELEA…RNLT), 139–182 (FTCS…SSFK), 189–231 (GHLD…SEDE), 266–305 (GHED…GIWV), 324–363 (GSAG…WLQL), 368–407 (GHTK…NAWH), 414–453 (IHGY…VRLL), 576–615 (GHSL…LDYN), 622–663 (AHSR…KICD), 668–711 (QFSD…LTKW), and 721–760 (APME…VTLG).

Belongs to the WD repeat ELP2 family. As to quaternary structure, component of the elongator complex.

The protein resides in the cytoplasm. It localises to the nucleus. It functions in the pathway tRNA modification; 5-methoxycarbonylmethyl-2-thiouridine-tRNA biosynthesis. In terms of biological role, component of the elongator complex which is required for multiple tRNA modifications, including mcm5U (5-methoxycarbonylmethyl uridine), mcm5s2U (5-methoxycarbonylmethyl-2-thiouridine), and ncm5U (5-carbamoylmethyl uridine). The elongator complex catalyzes formation of carboxymethyluridine in the wobble base at position 34 in tRNAs. This Schizosaccharomyces pombe (strain 972 / ATCC 24843) (Fission yeast) protein is Elongator complex protein 2 (elp2).